The primary structure comprises 598 residues: Probable ATP-dependent RNA helicase DDX52 (598 aa).

At lysine 15 the chain carries N6-acetyllysine. At serine 39 the chain carries Phosphoserine. A Q motif motif is present at residues 166-194 (QLDQEYKINSRLLQNILDAGFQVPTPIQM). Residues 197 to 375 (IPVMLHGREL…KLNLDNVVSV (179 aa)) enclose the Helicase ATP-binding domain. 210–217 (APTGSGKT) contributes to the ATP binding site. Positions 319–322 (DESD) match the DEAD box motif. Residues 386–547 (TVEQELLFVG…PVPEYIKGFQ (162 aa)) form the Helicase C-terminal domain.

The protein belongs to the DEAD box helicase family. DDX52/ROK1 subfamily.

Its subcellular location is the nucleus. It is found in the nucleolus. It catalyses the reaction ATP + H2O = ADP + phosphate + H(+). In terms of biological role, required for efficient ribosome biogenesis. May control cell cycle progression by regulating translation of mRNAs that contain a terminal oligo pyrimidine (TOP) motif in their 5' UTRs, such as GTPBP4. The protein is Probable ATP-dependent RNA helicase DDX52 (Ddx52) of Mus musculus (Mouse).